Here is a 276-residue protein sequence, read N- to C-terminus: Protein canopy homolog 3 (276 aa).

An N-terminal signal peptide occupies residues 1-26 (MESMSELAPRCLLFPLLLLLPLLLLP). Positions 47–269 (SKCEVCKYVA…EGVQKASPLP (223 aa)) constitute a Saposin B-type domain. 3 disulfides stabilise this stretch: Cys-49–Cys-206, Cys-52–Cys-194, and Cys-104–Cys-166. N-linked (GlcNAc...) asparagine glycosylation occurs at Asn-153. The stretch at 153–179 (NETSAEVADLKKQCDVLVEEFEEVIED) forms a coiled coil. The tract at residues 218-276 (IASLGGKKSKKKRSGVKGSSSGSSKQRKELGGLGEDANAEEEEGVQKASPLPHSPPDEL) is disordered.

This sequence belongs to the canopy family. In terms of assembly, interacts with HSP90B1; this interaction is disrupted in the presence of ATP. Interacts with TLR1, TLR2, TLR4 and TLR9. Strongest interaction with TLR4.

It is found in the endoplasmic reticulum. Functionally, toll-like receptor (TLR)-specific co-chaperone for HSP90B1. Required for proper TLR folding, except that of TLR3, and hence controls TLR exit from the endoplasmic reticulum. Consequently, required for both innate and adaptive immune responses. The polypeptide is Protein canopy homolog 3 (Cnpy3) (Mus musculus (Mouse)).